A 369-amino-acid chain; its full sequence is Glutamate 5-kinase (369 aa).

ATP is bound at residue K9. Residues S49, D136, and N148 each contribute to the substrate site. ATP-binding positions include 168–169 (TD) and 210–216 (TGGMLTK). The region spanning 275–355 (QGSIWVDKGA…KGVLIYRDDW (81 aa)) is the PUA domain.

Belongs to the glutamate 5-kinase family.

It is found in the cytoplasm. The catalysed reaction is L-glutamate + ATP = L-glutamyl 5-phosphate + ADP. The protein operates within amino-acid biosynthesis; L-proline biosynthesis; L-glutamate 5-semialdehyde from L-glutamate: step 1/2. Functionally, catalyzes the transfer of a phosphate group to glutamate to form L-glutamate 5-phosphate. This Streptococcus pneumoniae serotype 2 (strain D39 / NCTC 7466) protein is Glutamate 5-kinase.